Reading from the N-terminus, the 6684-residue chain is Replicase polyprotein 1ab (6684 aa).

Positions 2–108 constitute a CoV Nsp1 globular domain; sequence SSKQFKILVN…DFDLKIARTG (107 aa). Residues 111–349 form the CoV Nsp2 N-terminal domain; the sequence is AIYVDQYMCG…KSLVACSVKR (239 aa). The Zn(2+) site is built by cysteine 240, cysteine 242, cysteine 259, and cysteine 260. Positions 240 to 260 are C4; sequence CPCGSESSGVGDWTGFKTACC. A CoV Nsp2 middle domain is found at 378 to 773; sequence NVGLLFKKTP…CNAARNDIEI (396 aa). The CoV Nsp2 C-terminal domain occupies 768-879; sequence RNDIEIGGIP…VQRMYNKMGG (112 aa). The region spanning 882–983 is the Ubiquitin-like 1 domain; the sequence is KTVSFSEEVD…DGIMISQYDI (102 aa). The tract at residues 989–1032 is disordered; the sequence is EKSEVSASSEEEEVESVEEDPENEIVEASEGAEGTSSQEEVETV. Residues 997–1015 are compositionally biased toward acidic residues; it reads SEEEEVESVEEDPENEIVE. In terms of domain architecture, Peptidase C16 1 spans 1055-1299; it reads PWAAAVDVQE…FKVEKVEQQP (245 aa). Cysteine 1093 serves as the catalytic For PL1-PRO activity. The C4-type 1; degenerate zinc finger occupies 1164-1195; sequence CGCGEKEIVLERAVFKLTPLKESFNYGVCGDC. Active-site for PL1-PRO activity residues include histidine 1244 and aspartate 1257. Residues 1318-1489 form the Macro domain; sequence NDDLILPFYK…TIENFFSCSI (172 aa). The region spanning 1486-1542 is the Ubiquitin-like 2 domain; sequence SCSIPVNVTEDNVNHERVSVSFDKTYGEQLKGTVVIKDKDVTNQLPSAFDVGQKVIK. The 254-residue stretch at 1550–1803 folds into the Peptidase C16 2 domain; sequence AHYGFRDAAA…KVAASPKIVQ (254 aa). Catalysis depends on cysteine 1588, which acts as the For PL2-PRO activity. Cysteine 1667, cysteine 1670, cysteine 1694, and histidine 1696 together coordinate Zn(2+). The segment at 1667–1696 adopts a C4-type 2; atypical zinc-finger fold; that stretch reads CDKCAKVEKFVGPVVAAPLAIHGTDETCVH. Catalysis depends on for PL2-PRO activity residues histidine 1741 and aspartate 1754. Residues 1896-1916 form a helical membrane-spanning segment; the sequence is LVLLLIAIYNFFYLFVSIPVV. The tract at residues 1896 to 2053 is HD1; sequence LVLLLIAIYN…LALKHIVFAC (158 aa). Residues 1905–1970 form the 3Ecto domain; sequence NFFYLFVSIP…LQVTWDFKSD (66 aa). 2 disulfides stabilise this stretch: cysteine 1921–cysteine 1948 and cysteine 1939–cysteine 1945. Helical transmembrane passes span 1995–2015 and 2033–2053; these read CFLM…FGYV and FVIV…VFAC. Positions 2044–2134 are Y1; that stretch reads LALKHIVFAC…SVKQTVYATD (91 aa). Positions 2044 to 2384 constitute a CoV Nsp3 Y domain; the sequence is LALKHIVFAC…PYERFTESVS (341 aa). Zn(2+)-binding residues include histidine 2048, cysteine 2053, cysteine 2058, cysteine 2061, cysteine 2094, histidine 2097, cysteine 2101, and cysteine 2104. A ZF1 region spans residues 2048–2061; that stretch reads HIVFACSNPSCKTC. Residues 2094 to 2104 are ZF2; it reads CKKHNFYCKNC. The segment at 2135 to 2224 is Y2; it reads RSHQEVTKVE…IVNSDLLEDL (90 aa). The interval 2135–2384 is coV-Y; it reads RSHQEVTKVE…PYERFTESVS (250 aa). The tract at residues 2225–2281 is Y3; the sequence is SVDFKGALFNAKKNVIKNSFNVDVSECKNLDECYRACNLNVSFSTFEMAVNNAHRFG. Residues 2282–2384 form a Y4 region; it reads ILITDRSFNN…PYERFTESVS (103 aa). Helical transmembrane passes span 2401-2421, 2467-2487, 2497-2517, 2538-2558, 2666-2686, 2695-2715, 2721-2741, and 2746-2766; these read IVIL…YSVA, YGFI…VFDL, PAYV…AFGV, CVFN…VYCA, GAML…YGVL, CTFL…SYFV, FMII…YPGI, and FIIA…ILVF. Residues 2401–2766 are HD2; the sequence is IVILVFVFIF…YVITAYILVF (366 aa). Residues 2783–2878 form the Nsp4C domain; sequence LFEGDKFVGN…PTVSVNSTLQ (96 aa). A Peptidase C30 domain is found at 2879-3180; it reads SGLRKMAQPS…IRQMYGVNLQ (302 aa). Residues histidine 2919 and cysteine 3022 each act as for 3CL-PRO activity in the active site. The next 8 membrane-spanning stretches (helical) occupy residues 3187–3207, 3217–3237, 3242–3262, 3280–3300, 3313–3333, 3347–3367, 3371–3391, and 3394–3414; these read FFYP…EFFM, TFVS…VSGI, LFFM…NLFW, MFLP…IVFV, WFSL…IFGT, FVNM…VVIA, IAYY…FGFM, and ISIV…ILYW. Positions 3187–3414 are HD3; sequence FFYPIMTAMT…FCCYYGILYW (228 aa). Residues 3475-3557 enclose the RdRp Nsp7 cofactor domain; the sequence is SKLTEMKCTN…SYFENTTILQ (83 aa). In terms of domain architecture, RdRp Nsp8 cofactor spans 3558-3752; the sequence is SVASAYAALP…ITCERTTKLQ (195 aa). Positions 3753–3863 constitute a Nsp9 ssRNA-binding domain; that stretch reads NNEIMPGKLK…GYIGATVRLQ (111 aa). The region spanning 3864 to 4004 is the ExoN/MTase coactivator domain; that stretch reads AGKPTEHPSN…TSMQSFTVDQ (141 aa). Cysteine 3937, cysteine 3940, histidine 3946, cysteine 3953, cysteine 3979, cysteine 3982, cysteine 3990, and cysteine 3992 together coordinate Zn(2+). 2 zinc fingers span residues 3937-3953 and 3979-3992; these read CIYC…DGLC and CVVC…GCMC. A NiRAN domain is found at 4006 to 4255; the sequence is YLNRVRGSSA…ESENFVKSDI (250 aa). In terms of domain architecture, Nsp12 Interface spans 4261–4359; sequence KQYDLLAYDF…WNLDVKLDTM (99 aa). Positions 4290, 4296, 4301, 4305, and 4482 each coordinate Zn(2+). The region spanning 4360-4927 is the Nsp12 RNA-dependent RNA polymerase domain; it reads KLSMTDLLRF…SLYEKSTVLQ (568 aa). The segment at 4362 to 4576 is rdRp Fingers N-ter; sequence SMTDLLRFVT…HQKHLKSIAA (215 aa). Residues 4577–4615 form a rdRp Palm N-ter region; the sequence is TRNATVVIGSTKFYGGWDNMLKNLMRDVDNGCLMGWDYP. The RdRp catalytic domain occupies 4607–4769; that stretch reads GCLMGWDYPK…CYNKDYADLG (163 aa). The tract at residues 4616 to 4674 is rdRp Fingers C-ter; it reads KCDRALPNMIRMASAMILGSKHVGCCTHNDRFYRLSNELAQVLTEVVHCTGGFYFKPGG. Zn(2+) contacts are provided by histidine 4637, cysteine 4640, and cysteine 4641. A rdRp Palm C-ter region spans residues 4675-4810; the sequence is TTSGDGTTAY…SVGPHEFCSQ (136 aa). Catalysis depends on residues serine 4754, aspartate 4755, and aspartate 4756. The rdRp Thumb stretch occupies residues 4811–4927; the sequence is HTLQIVGPDG…SLYEKSTVLQ (117 aa). In terms of domain architecture, CV ZBD spans 4928-5040; the sequence is AAGMCVVCGS…EDFNKLAVSD (113 aa). Zn(2+) is bound by residues cysteine 4932, cysteine 4935, cysteine 4943, cysteine 4946, cysteine 4953, cysteine 4956, histidine 4960, histidine 4966, cysteine 4977, cysteine 4982, cysteine 4999, and histidine 5002. The region spanning 5175 to 5366 is the (+)RNA virus helicase ATP-binding domain; the sequence is NTISKLYPVF…MCTLGPDVFL (192 aa). Position 5210-5217 (5210-5217) interacts with ATP; it reads GPPGSGKS. The 170-residue stretch at 5367 to 5536 folds into the (+)RNA virus helicase C-terminal domain; that stretch reads HKCYRCPAEI…AKPETCGLFK (170 aa). An ExoN domain is found at 5598-5812; that stretch reads LFCTRDFAMR…RCLAIHDCFV (215 aa). Residues aspartate 5616, glutamate 5618, and glutamate 5717 contribute to the active site. Zn(2+) is bound by residues cysteine 5733, cysteine 5735, cysteine 5751, histidine 5754, histidine 5782, cysteine 5786, and histidine 5789. Residues histidine 5793 and aspartate 5798 contribute to the active site. Cysteine 5804 serves as a coordination point for Zn(2+). One can recognise an N7-MTase domain in the interval 5821 to 6042; sequence YPFIDNEEKI…MLWHGFVNSK (222 aa). An S-adenosyl-L-methionine-binding site is contributed by 5856 to 5862; it reads DVGNPKG. Residues 5933–5947 are gpppA-binding; sequence CNGGALYVNNHAFHT. Residues cysteine 5971, cysteine 5988, cysteine 5999, and histidine 6002 each contribute to the Zn(2+) site. The Nsp15 N-terminal oligomerization domain maps to 6046–6106; it reads SLENVAFNVV…NVAFELYAKR (61 aa). The region spanning 6107-6224 is the AV-Nsp11N/CoV-Nsp15M domain; that stretch reads KLGLTPPLTI…IYVRKNGEYV (118 aa). Residues 6241–6381 form the NendoU domain; it reads KPRSTMEEDF…ENSHIKTFYP (141 aa). Residues histidine 6271, histidine 6286, lysine 6327, lysine 6429, aspartate 6513, lysine 6553, and glutamate 6586 contribute to the active site. Positions 6385-6681 constitute a Nidovirus-type SAM-dependent 2'-O-MTase domain; it reads SAEWNPGYSM…KLLNFGNHFV (297 aa).

Belongs to the coronaviruses polyprotein 1ab family. In terms of assembly, 3CL-PRO exists as monomer and homodimer. Eight copies of nsp7 and eight copies of nsp8 assemble to form a heterohexadecamer. Nsp9 is a dimer. Nsp10 forms a dodecamer. Mn(2+) is required as a cofactor. Specific enzymatic cleavages in vivo by its own proteases yield mature proteins. 3CL-PRO is autocatalytically processed.

The protein resides in the host membrane. It is found in the host cytoplasm. It localises to the host perinuclear region. The protein localises to the host endoplasmic reticulum-Golgi intermediate compartment. The catalysed reaction is Thiol-dependent hydrolysis of ester, thioester, amide, peptide and isopeptide bonds formed by the C-terminal Gly of ubiquitin (a 76-residue protein attached to proteins as an intracellular targeting signal).. It carries out the reaction RNA(n) + a ribonucleoside 5'-triphosphate = RNA(n+1) + diphosphate. It catalyses the reaction ATP + H2O = ADP + phosphate + H(+). The enzyme catalyses a 5'-end diphospho-ribonucleoside in mRNA + GTP + H(+) = a 5'-end (5'-triphosphoguanosine)-ribonucleoside in mRNA + diphosphate. The catalysed reaction is a 5'-end (N(7)-methyl 5'-triphosphoguanosine)-ribonucleoside in mRNA + S-adenosyl-L-methionine = a 5'-end (N(7)-methyl 5'-triphosphoguanosine)-(2'-O-methyl-ribonucleoside) in mRNA + S-adenosyl-L-homocysteine + H(+). It carries out the reaction uridylyl-uridylyl-ribonucleotide-RNA = a 3'-end uridylyl-2',3'-cyclophospho-uridine-RNA + a 5'-end dephospho-ribonucleoside-RNA. In terms of biological role, the replicase polyprotein of coronaviruses is a multifunctional protein: it contains the activities necessary for the transcription of negative stranded RNA, leader RNA, subgenomic mRNAs and progeny virion RNA as well as proteinases responsible for the cleavage of the polyprotein into functional products. Functionally, non-structural protein 1 inhibits host translation. By suppressing host gene expression, nsp1 facilitates efficient viral gene expression in infected cells and evasion from host immune response. The papain-like proteinase 1 (PLP1) and papain-like proteinase 2 (PLP2) are responsible for the cleavages located at the N-terminus of the replicase polyprotein. In addition, PLP2 possesses a deubiquitinating/deISGylating activity and processes both 'Lys-48'- and 'Lys-63'-linked polyubiquitin chains from cellular substrates. PLP2 also antagonizes innate immune induction of type I interferon by blocking the nuclear translocation of host IRF-3. Its function is as follows. Responsible for the majority of cleavages as it cleaves the C-terminus of replicase polyprotein at 11 sites. Recognizes substrates containing the core sequence [ILMVF]-Q-|-[SAGC]. Inhibited by the substrate-analog Cbz-Val-Asn-Ser-Thr-Leu-Gln-CMK. In terms of biological role, the helicase which contains a zinc finger structure displays RNA and DNA duplex-unwinding activities with 5' to 3' polarity. ATPase activity is strongly stimulated by poly(U), poly(dT), poly(C), poly(dA), but not by poly(G). Functionally, the exoribonuclease acts on both ssRNA and dsRNA in a 3' to 5' direction. Nsp7-nsp8 hexadecamer may possibly confer processivity to the polymerase, maybe by binding to dsRNA or by producing primers utilized by the latter. Its function is as follows. Forms a primer, NSP9-pU, which is utilized by the polymerase for the initiation of RNA chains. Interacts with ribosome signal recognition particle RNA (SRP). Together with NSP8, suppress protein integration into the cell membrane, thereby disrupting host immune defenses. In terms of biological role, RNA-directed RNA polymerase that catalyzes the transcription of viral genomic and subgenomic RNAs. Acts in complex with nsp7 and nsp8 to transcribe both the minus and positive strands of genomic RNA. The kinase-like NiRAN domain of NSP12 attaches one or more nucleotides to the amino terminus of NSP9, forming a covalent RNA-protein intermediate that serves as transcription/replication primer. Subgenomic RNAs (sgRNAs) are formed by discontinuous transcription: The polymerase has the ability to pause at transcription-regulating sequences (TRS) and jump to the leader TRS, resulting in a major deletion. This creates a series of subgenomic RNAs that are replicated, transcribed and translated. In addition, Nsp12 is a subunit of the viral RNA capping enzyme that catalyzes the RNA guanylyltransferase reaction for genomic and sub-genomic RNAs. Subsequently, the NiRAN domain transfers RNA to GDP, and forms the core cap structure GpppA-RNA. Functionally, plays a role in viral transcription/replication and prevents the simultaneous activation of host cell dsRNA sensors, such as MDA5/IFIH1, OAS, and PKR. Acts by degrading the 5'-polyuridines generated during replication of the poly(A) region of viral genomic and subgenomic RNAs. Catalyzes a two-step reaction in which a 2'3'-cyclic phosphate (2'3'-cP) is first generated by 2'-O transesterification, which is then hydrolyzed to a 3'-phosphate (3'-P). If not degraded, poly(U) RNA would hybridize with poly(A) RNA tails and activate host dsRNA sensors. The polypeptide is Replicase polyprotein 1ab (rep) (Sus scrofa (Pig)).